The chain runs to 1325 residues: Protein PHYTOCHROME-DEPENDENT LATE-FLOWERING (1325 aa).

2 stretches are compositionally biased toward polar residues: residues 313–331 and 504–515; these read IGST…SVSG and NFPQTSWNVNPG. 5 disordered regions span residues 313-371, 462-558, 593-616, 852-875, and 1160-1325; these read IGST…MPGL, EPFE…EFSG, ANEA…NSLP, VAGQ…NSTQ, and QQQQ…GNNS. Residues 518-529 are compositionally biased toward basic and acidic residues; that stretch reads IEKEPKKEEQFS. Residues 596-607 show a composition bias toward low complexity; sequence AMQQRQHQAQMA. Polar residues predominate over residues 863–875; it reads HGNTGNTPNNSTQ. The span at 1160–1224 shows a compositional bias: low complexity; that stretch reads QQQQQQQLQQ…QQQATASPLQ (65 aa). The span at 1225–1239 shows a compositional bias: polar residues; sequence SVLSPPQVGSPSAGI. Residues 1240–1262 show a composition bias toward low complexity; it reads TQQQLQQSSPQQMSQRTPMSPQQ. Composition is skewed to polar residues over residues 1263 to 1286 and 1293 to 1325; these read VNQR…TSNL and PQLS…GNNS.

As to quaternary structure, component of a red light-dependent nuclear complex made of PHL, PHYB and CO. Interacts directly with PHYB and CO; CO binding requires the presence of PHYB. In terms of tissue distribution, mostly expressed in cotyledons and leaves, both in mesophyll and vasculature cells. Also present in roots, hypocotyls and shoot apices.

It localises to the nucleus. Its subcellular location is the nuclear body. The protein resides in the cytoplasmic granule. The protein localises to the cytoplasm. Functionally, triggers photoperiod-monitored flowering by repressing PHYB-dependent flowering negative regulation, probably through physical interactions with PHYB and CO. This chain is Protein PHYTOCHROME-DEPENDENT LATE-FLOWERING, found in Arabidopsis thaliana (Mouse-ear cress).